Reading from the N-terminus, the 442-residue chain is Vacuolar zinc transporter ZRC1 (442 aa).

Residues 1 to 8 are Cytoplasmic-facing; the sequence is MITGKELR. The helical transmembrane segment at 9 to 29 threads the bilayer; sequence IISLLTLDTVFFLLEITIGYM. Residues 30 to 32 lie on the Vacuolar side of the membrane; it reads SHS. The helical transmembrane segment at 33 to 53 threads the bilayer; that stretch reads LALIADSFHMLNDIISLLVAL. Residues 54-75 are Cytoplasmic-facing; it reads WAVDVAKNRGPDAKYTYGWKRA. A helical transmembrane segment spans residues 76–96; the sequence is EILGALINAVFLIALCFSIMI. Over 97–112 the chain is Vacuolar; sequence EALQRLIEPQEIQNPR. The helical transmembrane segment at 113-133 threads the bilayer; sequence LVLYVGVAGLISNVVGLFLFH. Residues 134-235 are Cytoplasmic-facing; it reads DHGSDSLHSH…GHRSLNMHGV (102 aa). Short sequence motifs (histidine repeat) lie at residues 141 to 145, 163 to 167, and 216 to 220; these read HSHSH and HDHSH. Disordered stretches follow at residues 141-170 and 208-227; these read HSHS…HASL and QPLL…KPGH. The span at 149 to 170 shows a compositional bias: polar residues; that stretch reads ESGNNDLDIESNATHSHSHASL. Basic and acidic residues predominate over residues 212-224; it reads NHDDHDHSHESKK. A helical membrane pass occupies residues 236-256; the sequence is FLHVLGDALGNIGVIAAALFI. The Vacuolar segment spans residues 257-265; the sequence is WKTEYSWRY. Residues 266–286 form a helical membrane-spanning segment; the sequence is YSDPIVSLIITIIIFSSALPL. At 287 to 442 the chain is on the cytoplasmic side; the sequence is SRRASRILLQ…AVNCNTSNCL (156 aa). A Glycyl lysine isopeptide (Lys-Gly) (interchain with G-Cter in ubiquitin) cross-link involves residue K357. Phosphoserine occurs at positions 387, 393, and 397. Residues 391-419 form a disordered region; that stretch reads GGSPSSSQEAFDSHGNTEHGRKKRSPTAY.

It belongs to the cation diffusion facilitator (CDF) transporter (TC 2.A.4) family. SLC30A subfamily.

Its subcellular location is the vacuole membrane. The catalysed reaction is Zn(2+)(in) = Zn(2+)(out). Its function is as follows. Vacuolar transporter that regulates zinc homeostasis by mediating zinc transport and storage into the vacuole. ZRC1 senses zinc availability in the cytosol, which might be performed through the histidine repeat motifs, and transports zinc from the cytosol to the vacuole if zinc in cytosol is abundant, conferring resistance to zinc toxicity. Plays a role in resistance to zinc shock resulting from sudden influx of zinc into cytoplasm when ZRT1 and ZRT2 are induced in response to zinc depletion. This Saccharomyces cerevisiae (strain ATCC 204508 / S288c) (Baker's yeast) protein is Vacuolar zinc transporter ZRC1.